The sequence spans 151 residues: Large ribosomal subunit protein bL9 (151 aa).

The protein belongs to the bacterial ribosomal protein bL9 family.

Functionally, binds to the 23S rRNA. This Francisella tularensis subsp. holarctica (strain LVS) protein is Large ribosomal subunit protein bL9.